Reading from the N-terminus, the 589-residue chain is LRR receptor-like serine/threonine-protein kinase FEI 2 (589 aa).

The first 28 residues, 1–28 (MGICLMKRCCSWFLLISFLSALTNENEA), serve as a signal peptide directing secretion. At 29–236 (ISPDGEALLS…TGQGGNNPKR (208 aa)) the chain is on the extracellular side. 5 LRR repeats span residues 72-96 (TKRV…LGKL), 97-120 (DQLR…LGNC), 122-144 (ALEG…IGNL), 145-168 (SGLK…LGQL), and 170-193 (RLTK…LLAR). N-linked (GlcNAc...) asparagine glycans are attached at residues Asn-119 and Asn-143. Residues Asn-175, Asn-215, and Asn-219 are each glycosylated (N-linked (GlcNAc...) asparagine). The chain crosses the membrane as a helical span at residues 237–257 (LLISASATVGGLLLVALMCFW). Over 258–589 (GCFLYKKLGR…PSDFYDSSSD (332 aa)) the chain is Cytoplasmic. Positions 304–576 (LNEEHIIGCG…VVQLLESEVM (273 aa)) constitute a Protein kinase domain. ATP is bound by residues 310–318 (IGCGGFGTV) and Lys-332. Ser-384 bears the Phosphoserine mark. The active-site Proton acceptor is the Asp-427. A phosphothreonine mark is found at Thr-460, Thr-461, and Thr-466. Phosphotyrosine is present on Tyr-474.

It belongs to the protein kinase superfamily. Ser/Thr protein kinase family. As to quaternary structure, interacts with the ACC synthases ACS5 and ACS9 but not ACS2, via the kinase domain. Post-translationally, autophosphorylated. In terms of tissue distribution, expressed in the root meristem and elongation zone, and in hypocotyls of etiolated seedlings.

Its subcellular location is the cell membrane. It catalyses the reaction L-seryl-[protein] + ATP = O-phospho-L-seryl-[protein] + ADP + H(+). The catalysed reaction is L-threonyl-[protein] + ATP = O-phospho-L-threonyl-[protein] + ADP + H(+). Its function is as follows. Involved in the signaling pathway that regulates cell wall function, including cellulose biosynthesis, likely via an 1-aminocyclopropane-1-carboxylic acid (ACC)-mediated signal (a precursor of ethylene). In Arabidopsis thaliana (Mouse-ear cress), this protein is LRR receptor-like serine/threonine-protein kinase FEI 2 (FEI2).